Here is an 83-residue protein sequence, read N- to C-terminus: U5-theraphotoxin-Hs1b 2 (83 aa).

The N-terminal stretch at 1–21 (MQTSMFLTLTGLVLLFVVCYA) is a signal peptide. Residues 22 to 49 (SESEEKEFPKELLSSIFAADSDFKEEER) constitute a propeptide that is removed on maturation. Disulfide bonds link C51-C63, C56-C68, and C62-C75.

The protein belongs to the neurotoxin 10 (Hwtx-1) family. 51 (Hntx-8) subfamily. Hntx-8 sub-subfamily. In terms of tissue distribution, expressed by the venom gland.

The protein resides in the secreted. In terms of biological role, agglutinates erythrocytes. This chain is U5-theraphotoxin-Hs1b 2, found in Cyriopagopus schmidti (Chinese bird spider).